The following is a 485-amino-acid chain: Glutamyl-tRNA(Gln) amidotransferase subunit A (485 aa).

Active-site charge relay system residues include Lys79 and Ser154. Ser178 acts as the Acyl-ester intermediate in catalysis.

Belongs to the amidase family. GatA subfamily. In terms of assembly, heterotrimer of A, B and C subunits.

The enzyme catalyses L-glutamyl-tRNA(Gln) + L-glutamine + ATP + H2O = L-glutaminyl-tRNA(Gln) + L-glutamate + ADP + phosphate + H(+). Its function is as follows. Allows the formation of correctly charged Gln-tRNA(Gln) through the transamidation of misacylated Glu-tRNA(Gln) in organisms which lack glutaminyl-tRNA synthetase. The reaction takes place in the presence of glutamine and ATP through an activated gamma-phospho-Glu-tRNA(Gln). This Staphylococcus aureus protein is Glutamyl-tRNA(Gln) amidotransferase subunit A.